A 209-amino-acid chain; its full sequence is Uracil phosphoribosyltransferase (209 aa).

5-phospho-alpha-D-ribose 1-diphosphate is bound by residues Arg-79, Arg-104, and 131 to 139 (DPMLATGGS). Residues Ile-194 and 199–201 (GDA) contribute to the uracil site. 5-phospho-alpha-D-ribose 1-diphosphate is bound at residue Asp-200.

It belongs to the UPRTase family. Requires Mg(2+) as cofactor.

The enzyme catalyses UMP + diphosphate = 5-phospho-alpha-D-ribose 1-diphosphate + uracil. It participates in pyrimidine metabolism; UMP biosynthesis via salvage pathway; UMP from uracil: step 1/1. With respect to regulation, allosterically activated by GTP. In terms of biological role, catalyzes the conversion of uracil and 5-phospho-alpha-D-ribose 1-diphosphate (PRPP) to UMP and diphosphate. This is Uracil phosphoribosyltransferase from Streptococcus thermophilus (strain CNRZ 1066).